The sequence spans 202 residues: IMP cyclohydrolase (202 aa).

The protein belongs to the archaeal IMP cyclohydrolase family.

It carries out the reaction IMP + H2O = 5-formamido-1-(5-phospho-D-ribosyl)imidazole-4-carboxamide. Its pathway is purine metabolism; IMP biosynthesis via de novo pathway; IMP from 5-formamido-1-(5-phospho-D-ribosyl)imidazole-4-carboxamide: step 1/1. Its function is as follows. Catalyzes the cyclization of 5-formylamidoimidazole-4-carboxamide ribonucleotide to IMP. This Methanosphaera stadtmanae (strain ATCC 43021 / DSM 3091 / JCM 11832 / MCB-3) protein is IMP cyclohydrolase.